Here is a 234-residue protein sequence, read N- to C-terminus: ATP synthase subunit a 1 (234 aa).

6 helical membrane-spanning segments follow: residues 29-49, 90-110, 116-136, 147-167, 186-206, and 207-227; these read FLVH…VALL, LIAT…IPGF, NLNT…VVGV, FVGP…IGHL, IVLV…MMLM, and GILV…IYIA.

This sequence belongs to the ATPase A chain family. F-type ATPases have 2 components, CF(1) - the catalytic core - and CF(0) - the membrane proton channel. CF(1) has five subunits: alpha(3), beta(3), gamma(1), delta(1), epsilon(1). CF(0) has three main subunits: a(1), b(2) and c(9-12). The alpha and beta chains form an alternating ring which encloses part of the gamma chain. CF(1) is attached to CF(0) by a central stalk formed by the gamma and epsilon chains, while a peripheral stalk is formed by the delta and b chains.

Its subcellular location is the cell inner membrane. In terms of biological role, key component of the proton channel; it plays a direct role in the translocation of protons across the membrane. This is ATP synthase subunit a 1 from Syntrophotalea carbinolica (strain DSM 2380 / NBRC 103641 / GraBd1) (Pelobacter carbinolicus).